We begin with the raw amino-acid sequence, 162 residues long: MRILKPYLRSTSIQCYLCLLLNSHFLTEACIPVFILSCINAGLPKTEANWQDVISDLKIIDKIIQSLHIDATLYTESDVHPNCKVTAMKCFLLELHVISLESKNETIHQTVENIIILANSGLSSNRNITETGCKECEELEEKNIKEFLQSFVHIVQMFINTS.

An N-terminal signal peptide occupies residues 1-29; it reads MRILKPYLRSTSIQCYLCLLLNSHFLTEA. A propeptide spanning residues 30–48 is cleaved from the precursor; it reads CIPVFILSCINAGLPKTEA. Cystine bridges form between C83/C133 and C90/C136. N-linked (GlcNAc...) asparagine glycosylation is found at N104 and N127.

Belongs to the IL-15/IL-21 family.

It is found in the secreted. Functionally, cytokine that plays a major role in the development of inflammatory and protective immune responses to microbial invaders and parasites by modulating immune cells of both the innate and adaptive immune systems. Stimulates the proliferation of natural killer cells, T-cells and B-cells and promotes the secretion of several cytokines. In monocytes, induces the production of IL8 and monocyte chemotactic protein 1/CCL2, two chemokines that attract neutrophils and monocytes respectively to sites of infection. Unlike most cytokines, which are secreted in soluble form, IL15 is expressed in association with its high affinity IL15RA on the surface of IL15-producing cells and delivers signals to target cells that express IL2RB and IL2RG receptor subunits. Binding to its receptor triggers the phosphorylation of JAK1 and JAK3 and the recruitment and subsequent phosphorylation of signal transducer and activator of transcription-3/STAT3 and STAT5. In mast cells, induces the rapid tyrosine phosphorylation of STAT6 and thereby controls mast cell survival and release of cytokines such as IL4. The protein is Interleukin-15 (IL15) of Felis catus (Cat).